A 246-amino-acid chain; its full sequence is Ribonuclease 3 (246 aa).

In terms of domain architecture, RNase III spans 16–144 (LLEFQKQAGL…VIGAYYIDSG (129 aa)). Residue Glu57 participates in Mg(2+) binding. Asp61 is a catalytic residue. Residues Asp130 and Glu133 each coordinate Mg(2+). Residue Glu133 is part of the active site. Residues 171–240 (DYKSLLQELV…AKVAYENLCS (70 aa)) enclose the DRBM domain.

Belongs to the ribonuclease III family. As to quaternary structure, homodimer. Mg(2+) serves as cofactor.

It is found in the cytoplasm. The catalysed reaction is Endonucleolytic cleavage to 5'-phosphomonoester.. In terms of biological role, digests double-stranded RNA. Involved in the processing of primary rRNA transcript to yield the immediate precursors to the large and small rRNAs (23S and 16S). Processes some mRNAs, and tRNAs when they are encoded in the rRNA operon. Processes pre-crRNA and tracrRNA of type II CRISPR loci if present in the organism. The polypeptide is Ribonuclease 3 (Treponema denticola (strain ATCC 35405 / DSM 14222 / CIP 103919 / JCM 8153 / KCTC 15104)).